Reading from the N-terminus, the 1388-residue chain is DNA-directed RNA polymerase subunit beta' (1388 aa).

Residues Cys-76, Cys-78, Cys-91, and Cys-94 each coordinate Zn(2+). The Mg(2+) site is built by Asp-467, Asp-469, and Asp-471. Zn(2+) contacts are provided by Cys-810, Cys-884, Cys-891, and Cys-894.

This sequence belongs to the RNA polymerase beta' chain family. The RNAP catalytic core consists of 2 alpha, 1 beta, 1 beta' and 1 omega subunit. When a sigma factor is associated with the core the holoenzyme is formed, which can initiate transcription. It depends on Mg(2+) as a cofactor. Zn(2+) is required as a cofactor.

The enzyme catalyses RNA(n) + a ribonucleoside 5'-triphosphate = RNA(n+1) + diphosphate. Its function is as follows. DNA-dependent RNA polymerase catalyzes the transcription of DNA into RNA using the four ribonucleoside triphosphates as substrates. This Lawsonia intracellularis (strain PHE/MN1-00) protein is DNA-directed RNA polymerase subunit beta'.